The chain runs to 492 residues: MTKDNSEYLIERRDNVYEVVIGLEVHAQVTSNSKLFSSSSTTFGAEPNTQVSLVDAAFPGMLPVINEYCVKQAIKTGIGLRAQINKRSVFDRKNYFYADLPQGYQISQFKYPIVGEGTVILDMAHGQKEVGIERLHLEQDAGKSIHDMDPQNTLVDLNRSGVALMEIVSKPDMRTPDEVSAYIKKLRSIMRYLGTCDGNMQEGSLRADVNISVRIKGSDKLGTRCEIKNVNSIKFMQMAIDYEANRQVDLIEDGKTIDQETRLFDTKKNETRSMRSKEDAHDYRYFPDPDLLPLEVTDEFIEKLKADIPELPDDKKKRFIDEFKVSAYEATILVSDIETAKYFEEVVAKMGKNKDMKLAVNWITGELFAVLNNKNLEISESPVSAKNLAKLINLIKNGTISGKIAKTIFELMIDGDIDPQIIVEEKGLKQESDPKALEALIDKIIDTNREKAIEYKNGKEKLFGFFVGQAMKVSGGKANPQLINEILKKKLQ.

Belongs to the GatB/GatE family. GatB subfamily. In terms of assembly, heterotrimer of A, B and C subunits.

The enzyme catalyses L-glutamyl-tRNA(Gln) + L-glutamine + ATP + H2O = L-glutaminyl-tRNA(Gln) + L-glutamate + ADP + phosphate + H(+). It carries out the reaction L-aspartyl-tRNA(Asn) + L-glutamine + ATP + H2O = L-asparaginyl-tRNA(Asn) + L-glutamate + ADP + phosphate + 2 H(+). Functionally, allows the formation of correctly charged Asn-tRNA(Asn) or Gln-tRNA(Gln) through the transamidation of misacylated Asp-tRNA(Asn) or Glu-tRNA(Gln) in organisms which lack either or both of asparaginyl-tRNA or glutaminyl-tRNA synthetases. The reaction takes place in the presence of glutamine and ATP through an activated phospho-Asp-tRNA(Asn) or phospho-Glu-tRNA(Gln). The protein is Aspartyl/glutamyl-tRNA(Asn/Gln) amidotransferase subunit B of Pelagibacter ubique (strain HTCC1062).